A 159-amino-acid polypeptide reads, in one-letter code: NAD(P)H-quinone oxidoreductase subunit J, chloroplastic (159 aa).

The protein belongs to the complex I 30 kDa subunit family. As to quaternary structure, NDH is composed of at least 16 different subunits, 5 of which are encoded in the nucleus.

The protein resides in the plastid. It localises to the chloroplast thylakoid membrane. It carries out the reaction a plastoquinone + NADH + (n+1) H(+)(in) = a plastoquinol + NAD(+) + n H(+)(out). The enzyme catalyses a plastoquinone + NADPH + (n+1) H(+)(in) = a plastoquinol + NADP(+) + n H(+)(out). NDH shuttles electrons from NAD(P)H:plastoquinone, via FMN and iron-sulfur (Fe-S) centers, to quinones in the photosynthetic chain and possibly in a chloroplast respiratory chain. The immediate electron acceptor for the enzyme in this species is believed to be plastoquinone. Couples the redox reaction to proton translocation, and thus conserves the redox energy in a proton gradient. This is NAD(P)H-quinone oxidoreductase subunit J, chloroplastic from Oryza nivara (Indian wild rice).